A 224-amino-acid chain; its full sequence is Large ribosomal subunit protein uL4 (224 aa).

Positions 52–109 (AAARQGTHSTKTRGDVSGGGRKPYRQKGTGRARQGSTRAPQFTGGGVVHGPKPRDYSQ) are disordered.

Belongs to the universal ribosomal protein uL4 family. In terms of assembly, part of the 50S ribosomal subunit.

One of the primary rRNA binding proteins, this protein initially binds near the 5'-end of the 23S rRNA. It is important during the early stages of 50S assembly. It makes multiple contacts with different domains of the 23S rRNA in the assembled 50S subunit and ribosome. Functionally, forms part of the polypeptide exit tunnel. In Mycobacterium marinum (strain ATCC BAA-535 / M), this protein is Large ribosomal subunit protein uL4.